The chain runs to 492 residues: Catalase isozyme 1 (492 aa).

Residues His-65 and Asn-138 contribute to the active site. Tyr-348 provides a ligand contact to heme.

The protein belongs to the catalase family. As to quaternary structure, homotetramer. Requires heme as cofactor. In terms of tissue distribution, scutella, milky endosperm of immature kernels, leaves and epicotyls.

The protein resides in the peroxisome. It catalyses the reaction 2 H2O2 = O2 + 2 H2O. In terms of biological role, occurs in almost all aerobically respiring organisms and serves to protect cells from the toxic effects of hydrogen peroxide. The sequence is that of Catalase isozyme 1 (CAT1) from Zea mays (Maize).